Reading from the N-terminus, the 127-residue chain is Single-stranded DNA-binding protein 2 (127 aa).

Residues 4 to 103 (INKVMLVGRC…ITINTIELLG (100 aa)) form the SSB domain. The interval 104–127 (SPRKEESTSTSAPNETQAVANANF) is disordered. Over residues 111 to 127 (TSTSAPNETQAVANANF) the composition is skewed to polar residues.

Homotetramer.

The chain is Single-stranded DNA-binding protein 2 (ssb2) from Nostoc sp. (strain PCC 7120 / SAG 25.82 / UTEX 2576).